The sequence spans 324 residues: HPr kinase/phosphorylase (324 aa).

Catalysis depends on residues His-146 and Lys-167. ATP is bound at residue 161–168 (GDSGLGKS). Residue Ser-168 participates in Mg(2+) binding. The active-site Proton acceptor; for phosphorylation activity. Proton donor; for dephosphorylation activity is Asp-185. Residues 209 to 218 (LEVRGLGLLD) are important for the catalytic mechanism of both phosphorylation and dephosphorylation. Glu-210 contacts Mg(2+). Arg-250 is an active-site residue. Positions 271 to 276 (QVAAGR) are important for the catalytic mechanism of dephosphorylation.

This sequence belongs to the HPrK/P family. Homohexamer. Mg(2+) is required as a cofactor.

The enzyme catalyses [HPr protein]-L-serine + ATP = [HPr protein]-O-phospho-L-serine + ADP + H(+). The catalysed reaction is [HPr protein]-O-phospho-L-serine + phosphate + H(+) = [HPr protein]-L-serine + diphosphate. Its function is as follows. Catalyzes the ATP- as well as the pyrophosphate-dependent phosphorylation of a specific serine residue in HPr, a phosphocarrier protein of the phosphoenolpyruvate-dependent sugar phosphotransferase system (PTS). HprK/P also catalyzes the pyrophosphate-producing, inorganic phosphate-dependent dephosphorylation (phosphorolysis) of seryl-phosphorylated HPr (P-Ser-HPr). This is HPr kinase/phosphorylase from Ralstonia nicotianae (strain ATCC BAA-1114 / GMI1000) (Ralstonia solanacearum).